The sequence spans 119 residues: Ribonuclease P protein component (119 aa).

This sequence belongs to the RnpA family. As to quaternary structure, consists of a catalytic RNA component (M1 or rnpB) and a protein subunit.

It carries out the reaction Endonucleolytic cleavage of RNA, removing 5'-extranucleotides from tRNA precursor.. Its function is as follows. RNaseP catalyzes the removal of the 5'-leader sequence from pre-tRNA to produce the mature 5'-terminus. It can also cleave other RNA substrates such as 4.5S RNA. The protein component plays an auxiliary but essential role in vivo by binding to the 5'-leader sequence and broadening the substrate specificity of the ribozyme. This is Ribonuclease P protein component from Chlamydia muridarum (strain MoPn / Nigg).